Reading from the N-terminus, the 316-residue chain is Malate dehydrogenase 2 (316 aa).

Residues 10 to 15 and Asp34 contribute to the NAD(+) site; that span reads GGGQIG. Arg83 and Arg89 together coordinate substrate. NAD(+) is bound by residues Asn96 and 119 to 121; that span reads ISN. Residues Asn121 and Arg152 each contribute to the substrate site. The active-site Proton acceptor is His176.

The protein belongs to the LDH/MDH superfamily. MDH type 3 family.

It carries out the reaction (S)-malate + NAD(+) = oxaloacetate + NADH + H(+). Its function is as follows. Catalyzes the reversible oxidation of malate to oxaloacetate. In Anaeromyxobacter dehalogenans (strain 2CP-C), this protein is Malate dehydrogenase 2.